We begin with the raw amino-acid sequence, 490 residues long: NAD/NADP-dependent betaine aldehyde dehydrogenase (490 aa).

K(+)-binding residues include threonine 26, isoleucine 27, and aspartate 93. NADPH is bound at residue 150–153; the sequence is GAWN. Residue lysine 162 is the Charge relay system of the active site. 176–179 lines the NADPH pocket; the sequence is KPSE. Valine 180 provides a ligand contact to K(+). NADPH-binding positions include glycine 209 and 230-233; that span reads GTST. Leucine 246 serves as a coordination point for K(+). The active-site Proton acceptor is glutamate 252. The NADPH site is built by cysteine 286 and glutamate 387. Residue cysteine 286 is the Nucleophile of the active site. A Cysteine sulfenic acid (-SOH) modification is found at cysteine 286. K(+) contacts are provided by lysine 457 and glycine 460. The active-site Charge relay system is glutamate 464.

This sequence belongs to the aldehyde dehydrogenase family. Dimer of dimers. K(+) is required as a cofactor.

The enzyme catalyses betaine aldehyde + NAD(+) + H2O = glycine betaine + NADH + 2 H(+). It catalyses the reaction betaine aldehyde + NADP(+) + H2O = glycine betaine + NADPH + 2 H(+). Its pathway is amine and polyamine biosynthesis; betaine biosynthesis via choline pathway; betaine from betaine aldehyde: step 1/1. Its function is as follows. Involved in the biosynthesis of the osmoprotectant glycine betaine. Catalyzes the irreversible oxidation of betaine aldehyde to the corresponding acid. In P.aeruginosa this reaction is a compulsory step in the assimilation of carbon and nitrogen when bacteria are growing in choline or choline precursors. Can use NADP(+) with similar efficiency to NAD(+), a property that can be used by the bacterium to produce the NADPH needed to combat the oxidative stress imposed by the host defenses. This chain is NAD/NADP-dependent betaine aldehyde dehydrogenase, found in Pseudomonas aeruginosa (strain ATCC 15692 / DSM 22644 / CIP 104116 / JCM 14847 / LMG 12228 / 1C / PRS 101 / PAO1).